The following is a 123-amino-acid chain: uncharacterized protein (123 aa).

The signal sequence occupies residues 1–25 (MKHGIKALLITLSLACAGMSHSALA). Positions 40–53 (EAPAAQSKAAVPAK) are enriched in low complexity. The interval 40-62 (EAPAAQSKAAVPAKASDEEGTRV) is disordered. 2 HhH domains span residues 60 to 90 (TRVSINNASAEELARAMNGVGLKKAQAIVSY) and 91 to 120 (REEYGPFKTVEDLKQVPGMGNSLVERNLAV).

This is an uncharacterized protein from Escherichia coli (strain K12).